The chain runs to 490 residues: MSRMAEQQLYIHGGYTSATSGRTFETINPANGNVLATVQAAGREDVDRAVKSAQQGQKIWAAMTAMERSRILRRAVDILRERNDELAKLETLDTGKAYSETSTVDIVTGADVLEYYAGLIPALEGSQIPLRETSFVYTRREPLGVVAGIGAWNYPIQIALWKSAPALAAGNAMIFKPSEVTPLTALKLAEIYSEAGLPDGVFNVLPGVGAETGQYLTDHPGIAKVSFTGGVASGKKVMANSAASSLKEVTMELGGKSPLIVFDDADLDLAADITMMANFFSSGQVCTNGTRVFVPTKCKAAFEQKILARVERIRAGDVFDPQTNFGPLVSFPHRDNVLRYIAKGIEEGARVLCGGDVLKGDSFDNGAWVAPTVFTDCSDDMTIVREEIFGPVMSILTYESEDEVIRRANDTDYGLAAGIVTADLNLAHRVIHQLEAGICWINTWGESPAEMPVGGYKHSGIGRENGVMTLQSYTQVKSIQVEMAKFQSIF.

K(+)-binding residues include Thr-26, Ile-27, and Asp-93. 150–152 provides a ligand contact to NAD(+); that stretch reads GAW. Catalysis depends on Lys-162, which acts as the Charge relay system. 176–179 is an NAD(+) binding site; sequence KPSE. K(+) is bound at residue Val-180. 230–233 is an NAD(+) binding site; that stretch reads GVAS. Position 246 (Leu-246) interacts with K(+). The active-site Proton acceptor is the Glu-252. Residues Gly-254, Cys-286, and Glu-387 each contribute to the NAD(+) site. Residue Cys-286 is the Nucleophile of the active site. Cysteine sulfenic acid (-SOH) is present on Cys-286. 2 residues coordinate K(+): Lys-457 and Gly-460. Catalysis depends on Glu-464, which acts as the Charge relay system.

It belongs to the aldehyde dehydrogenase family. Dimer of dimers. The cofactor is K(+).

The enzyme catalyses betaine aldehyde + NAD(+) + H2O = glycine betaine + NADH + 2 H(+). Its pathway is amine and polyamine biosynthesis; betaine biosynthesis via choline pathway; betaine from betaine aldehyde: step 1/1. Its function is as follows. Involved in the biosynthesis of the osmoprotectant glycine betaine. Catalyzes the irreversible oxidation of betaine aldehyde to the corresponding acid. This Escherichia coli O45:K1 (strain S88 / ExPEC) protein is Betaine aldehyde dehydrogenase.